The sequence spans 228 residues: 2,3-bisphosphoglycerate-dependent phosphoglycerate mutase (228 aa).

Substrate-binding positions include 8 to 15, 21 to 22, R60, 87 to 90, K98, 114 to 115, and 180 to 181; these read RHGQSQWN, TG, ERHY, RR, and GN. Catalysis depends on H9, which acts as the Tele-phosphohistidine intermediate. The Proton donor/acceptor role is filled by E87.

Belongs to the phosphoglycerate mutase family. BPG-dependent PGAM subfamily. Homodimer.

It carries out the reaction (2R)-2-phosphoglycerate = (2R)-3-phosphoglycerate. It participates in carbohydrate degradation; glycolysis; pyruvate from D-glyceraldehyde 3-phosphate: step 3/5. In terms of biological role, catalyzes the interconversion of 2-phosphoglycerate and 3-phosphoglycerate. The chain is 2,3-bisphosphoglycerate-dependent phosphoglycerate mutase from Novosphingobium aromaticivorans (strain ATCC 700278 / DSM 12444 / CCUG 56034 / CIP 105152 / NBRC 16084 / F199).